We begin with the raw amino-acid sequence, 290 residues long: MARPGNIALVTARSAGLRGSGQPQGRRQQQAQGQQRSASLPGQRSKEKKKVNCKPKNQDEQEIPFRLREIMRSRQEMKKTLSNKKRKKEAQVAFKKTLEKEAKGEEPDIAVPKFKQRKGESDVAYVQRMEQEAQHVLFLSKNQAPRQPEVQAAPKKEKSERKKAFQKRRLEKAQRKREARAVDRLEQELLKDTVKFGEVVLQPPELTVQPRRSTSRDAPGKKSLMLKKMLLGPGGGSPAPATSLARQRILGEERERAVQAYRALKKLHRQEMTPAQPPGSSFQRQGHACL.

Disordered regions lie at residues 1 to 92 (MARP…EAQV), 98 to 117 (LEKEAKGEEPDIAVPKFKQR), 139 to 181 (LSKN…EARA), and 269 to 290 (RQEMTPAQPPGSSFQRQGHACL). Positions 20–39 (SGQPQGRRQQQAQGQQRSAS) are enriched in low complexity. Basic and acidic residues predominate over residues 56-79 (KNQDEQEIPFRLREIMRSRQEMKK). A coiled-coil region spans residues 66–89 (RLREIMRSRQEMKKTLSNKKRKKE). Basic and acidic residues predominate over residues 154 to 163 (PKKEKSERKK). Positions 155 to 192 (KKEKSERKKAFQKRRLEKAQRKREARAVDRLEQELLKD) form a coiled coil. Positions 164 to 178 (AFQKRRLEKAQRKRE) are enriched in basic residues.

The protein resides in the chromosome. This Mus musculus (Mouse) protein is Coiled-coil domain-containing protein 137 (Ccdc137).